Here is a 123-residue protein sequence, read N- to C-terminus: MPTISQLVRRGRERLQVKKKAPALKESPQKRGVCTRVYTTTPKKPNSALRKVARVRLTNGFEVTSYIPGVGHNLQEHSVVLIRGGRVKDLPGVRYHIIRGTLDAVGVQGRKQGRSKYGAKRAS.

D89 carries the post-translational modification 3-methylthioaspartic acid.

Belongs to the universal ribosomal protein uS12 family. In terms of assembly, part of the 30S ribosomal subunit. Contacts proteins S8 and S17. May interact with IF1 in the 30S initiation complex.

With S4 and S5 plays an important role in translational accuracy. In terms of biological role, interacts with and stabilizes bases of the 16S rRNA that are involved in tRNA selection in the A site and with the mRNA backbone. Located at the interface of the 30S and 50S subunits, it traverses the body of the 30S subunit contacting proteins on the other side and probably holding the rRNA structure together. The combined cluster of proteins S8, S12 and S17 appears to hold together the shoulder and platform of the 30S subunit. The sequence is that of Small ribosomal subunit protein uS12 from Anaeromyxobacter dehalogenans (strain 2CP-1 / ATCC BAA-258).